The sequence spans 333 residues: Phosphoribosylformylglycinamidine cyclo-ligase (333 aa).

It belongs to the AIR synthase family.

The protein localises to the cytoplasm. The enzyme catalyses 2-formamido-N(1)-(5-O-phospho-beta-D-ribosyl)acetamidine + ATP = 5-amino-1-(5-phospho-beta-D-ribosyl)imidazole + ADP + phosphate + H(+). The protein operates within purine metabolism; IMP biosynthesis via de novo pathway; 5-amino-1-(5-phospho-D-ribosyl)imidazole from N(2)-formyl-N(1)-(5-phospho-D-ribosyl)glycinamide: step 2/2. This is Phosphoribosylformylglycinamidine cyclo-ligase from Methanosarcina acetivorans (strain ATCC 35395 / DSM 2834 / JCM 12185 / C2A).